The sequence spans 416 residues: Serine hydroxymethyltransferase (416 aa).

Residues leucine 119 and 123–125 (GHL) contribute to the (6S)-5,6,7,8-tetrahydrofolate site. At lysine 228 the chain carries N6-(pyridoxal phosphate)lysine.

This sequence belongs to the SHMT family. As to quaternary structure, homodimer. Requires pyridoxal 5'-phosphate as cofactor.

The protein localises to the cytoplasm. It carries out the reaction (6R)-5,10-methylene-5,6,7,8-tetrahydrofolate + glycine + H2O = (6S)-5,6,7,8-tetrahydrofolate + L-serine. It participates in one-carbon metabolism; tetrahydrofolate interconversion. It functions in the pathway amino-acid biosynthesis; glycine biosynthesis; glycine from L-serine: step 1/1. Functionally, catalyzes the reversible interconversion of serine and glycine with tetrahydrofolate (THF) serving as the one-carbon carrier. This reaction serves as the major source of one-carbon groups required for the biosynthesis of purines, thymidylate, methionine, and other important biomolecules. Also exhibits THF-independent aldolase activity toward beta-hydroxyamino acids, producing glycine and aldehydes, via a retro-aldol mechanism. This is Serine hydroxymethyltransferase from Moorella thermoacetica (strain ATCC 39073 / JCM 9320).